We begin with the raw amino-acid sequence, 385 residues long: Prostacyclin receptor (385 aa).

The Extracellular portion of the chain corresponds to 1 to 16 (MADSCRNLTYVRDSVG). Disulfide bonds link Cys5–Cys165 and Cys92–Cys170. An N-linked (GlcNAc...) asparagine glycan is attached at Asn7. Residues 17-38 (PATSTLMFVAGVVGNGLALGIL) form a helical membrane-spanning segment. Topologically, residues 39–51 (GARRHSRPSAFAV) are cytoplasmic. The chain crosses the membrane as a helical span at residues 52-76 (LVTGLGVTDLLGTCFLSPAVFAAYA). The Extracellular portion of the chain corresponds to 77–94 (RNSSLLGLARGRPALCDA). The chain crosses the membrane as a helical span at residues 95–115 (FAFAMTFFGLASTLILFAMAV). At 116–134 (ERCLALSHPYLYAQLDGPR) the chain is on the cytoplasmic side. A helical membrane pass occupies residues 135–158 (RARLALPAIYAFCTIFCSLPFLGL). Residues 159–181 (GQHQQYCPGSWCFIRMRSAEPGG) lie on the Extracellular side of the membrane. The helical transmembrane segment at 182–208 (CAFLLAYASLVALLVAAIVLCNGSVTL) threads the bilayer. Residues 209–234 (SLCRMYRQQRRHQARCPRPRAGEDEV) are Cytoplasmic-facing. A helical membrane pass occupies residues 235-259 (DHLILLALMTGIMAVCSLPLTPQIR). At 260–273 (GFTQAIAPDSSEMG) the chain is on the extracellular side. The chain crosses the membrane as a helical span at residues 274–294 (DLLAFRFNAFNPILDPWVFIL). Over 295–385 (FRKSVFQRLK…AGSEAACSLC (91 aa)) the chain is Cytoplasmic. Residues 315–344 (AQGDSRTSLSQSASGRKDSSAPPALEGKKG) are disordered. Residues 318–328 (DSRTSLSQSAS) are compositionally biased toward polar residues. Cys382 bears the Cysteine methyl ester mark. A lipid anchor (S-farnesyl cysteine) is attached at Cys382. A propeptide spans 383–385 (SLC) (removed in mature form).

It belongs to the G-protein coupled receptor 1 family. Interacts (non-isoprenylated C-terminus) with PDZK1. Post-translationally, isoprenylation does not influence ligand binding but is required for efficient coupling to the effectors adenylyl cyclase and phospholipase C.

The protein resides in the cell membrane. In terms of biological role, receptor for prostacyclin (prostaglandin I2 or PGI2). The activity of this receptor is mediated by G(s) proteins which activate adenylate cyclase. The polypeptide is Prostacyclin receptor (PTGIR) (Bos taurus (Bovine)).